Consider the following 772-residue polypeptide: C-Maf-inducing protein (772 aa).

In terms of domain architecture, PH spans Lys52–Lys160. LRR repeat units follow at residues Asn662–Lys683, Ser686–Ser706, Thr711–Ser731, and Ser735–Lys755.

It is found in the nucleus. The protein localises to the cytoplasm. In terms of biological role, plays a role in T-cell signaling pathway. The protein is C-Maf-inducing protein (cmip) of Xenopus laevis (African clawed frog).